Consider the following 348-residue polypeptide: Dehydrogenase orsE (348 aa).

Position 43–46 (43–46 (LDTH)) interacts with NADP(+). Substrate is bound at residue 130 to 137 (FAVEAAVC). Residues 180–183 (SSSV), 203–206 (GAHN), and 272–273 (VH) each bind NADP(+). Substrate is bound at residue 292-296 (NDIAT). 339-340 (VS) is a binding site for NADP(+).

This sequence belongs to the zinc-containing alcohol dehydrogenase family. As to quaternary structure, monomer.

Dehydrogenase; part of the gene cluster that mediates the biosynthesis of orsellinic acid, as well as of the cathepsin K inhibitors F9775 A and F9775 B. The non-reducing polyketide synthase orsA produces orsellinic acid by condensing acetyl-CoA with 3 malonyl-CoA units. Further modifications by the decarboxylase orsB and the tyrosinase-like protein orsC lead to the production of F9775 A and F9775 B. The functions of orsD and orsE remain unclear since only orsB and orsC are required to convert orsellinic acid into F9775 A and F9775 B. The chain is Dehydrogenase orsE from Emericella nidulans (strain FGSC A4 / ATCC 38163 / CBS 112.46 / NRRL 194 / M139) (Aspergillus nidulans).